The chain runs to 258 residues: tRNA pseudouridine synthase A (258 aa).

Asp53 acts as the Nucleophile in catalysis. Tyr111 is a substrate binding site.

The protein belongs to the tRNA pseudouridine synthase TruA family. As to quaternary structure, homodimer.

The catalysed reaction is uridine(38/39/40) in tRNA = pseudouridine(38/39/40) in tRNA. Functionally, formation of pseudouridine at positions 38, 39 and 40 in the anticodon stem and loop of transfer RNAs. The chain is tRNA pseudouridine synthase A from Streptococcus agalactiae serotype III (strain NEM316).